We begin with the raw amino-acid sequence, 416 residues long: Squamosa promoter-binding-like protein 8 (416 aa).

Positions 11–53 are disordered; it reads SSCDDFGYNATPPPPPSLLPIMDQDGGGGSIQRDHHHHHNHQQ. An SBP-type zinc finger spans residues 182–260; the sequence is PPRCQAEGCK…ADHNRRRRKS (79 aa). Cys-185, Cys-190, Cys-207, His-210, Cys-227, Cys-230, His-234, and Cys-246 together coordinate Zn(2+). The short motif at 243–259 is the Bipartite nuclear localization signal element; that stretch reads KKSCRKRLADHNRRRRK. The tract at residues 250 to 299 is disordered; it reads LADHNRRRRKSKPSDGEHSGEKRRAQANKSAATKDKAGSSSKNAGIGDGF. The segment covering 261–273 has biased composition (basic and acidic residues); that stretch reads KPSDGEHSGEKRR.

Expressed in stems, leaf sheaths, and young panicles.

Its subcellular location is the nucleus. Functionally, probable transcription factor that plays an important role in building the laminar joint between leaf blade and leaf sheath boundary, thereby controlling ligule and auricle development. In Oryza sativa subsp. indica (Rice), this protein is Squamosa promoter-binding-like protein 8 (SPL8).